Consider the following 179-residue polypeptide: Large ribosomal subunit protein uL5 (179 aa).

It belongs to the universal ribosomal protein uL5 family. As to quaternary structure, part of the 50S ribosomal subunit; part of the 5S rRNA/L5/L18/L25 subcomplex. Contacts the 5S rRNA and the P site tRNA. Forms a bridge to the 30S subunit in the 70S ribosome.

In terms of biological role, this is one of the proteins that bind and probably mediate the attachment of the 5S RNA into the large ribosomal subunit, where it forms part of the central protuberance. In the 70S ribosome it contacts protein S13 of the 30S subunit (bridge B1b), connecting the 2 subunits; this bridge is implicated in subunit movement. Contacts the P site tRNA; the 5S rRNA and some of its associated proteins might help stabilize positioning of ribosome-bound tRNAs. This Dechloromonas aromatica (strain RCB) protein is Large ribosomal subunit protein uL5.